The following is a 113-amino-acid chain: Hydrogenase maturation factor HypA (113 aa).

Histidine 2 lines the Ni(2+) pocket. 4 residues coordinate Zn(2+): cysteine 73, cysteine 76, cysteine 89, and cysteine 92.

The protein belongs to the HypA/HybF family.

Involved in the maturation of [NiFe] hydrogenases. Required for nickel insertion into the metal center of the hydrogenase. The polypeptide is Hydrogenase maturation factor HypA (Legionella pneumophila subsp. pneumophila (strain Philadelphia 1 / ATCC 33152 / DSM 7513)).